The sequence spans 349 residues: tRNA pseudouridine synthase D (349 aa).

Phe27 contacts substrate. Asp80 (nucleophile) is an active-site residue. Asn129 contributes to the substrate binding site. The region spanning 155-303 (GVPNYFGAQR…VEAARRAMLL (149 aa)) is the TRUD domain. Substrate is bound at residue Phe329.

Belongs to the pseudouridine synthase TruD family.

It catalyses the reaction uridine(13) in tRNA = pseudouridine(13) in tRNA. Functionally, responsible for synthesis of pseudouridine from uracil-13 in transfer RNAs. This Escherichia fergusonii (strain ATCC 35469 / DSM 13698 / CCUG 18766 / IAM 14443 / JCM 21226 / LMG 7866 / NBRC 102419 / NCTC 12128 / CDC 0568-73) protein is tRNA pseudouridine synthase D.